Reading from the N-terminus, the 618-residue chain is UvrABC system protein C (618 aa).

A GIY-YIG domain is found at 13 to 92; sequence DKPGVYLMKN…IKKYRPKYNI (80 aa). Residues 204–239 enclose the UVR domain; the sequence is LDIVENFKLNMEKAAENLEFEKAAMLRDKINIIEKI.

The protein belongs to the UvrC family. Interacts with UvrB in an incision complex.

It localises to the cytoplasm. In terms of biological role, the UvrABC repair system catalyzes the recognition and processing of DNA lesions. UvrC both incises the 5' and 3' sides of the lesion. The N-terminal half is responsible for the 3' incision and the C-terminal half is responsible for the 5' incision. In Clostridium botulinum (strain Loch Maree / Type A3), this protein is UvrABC system protein C.